The primary structure comprises 181 residues: UPF0301 protein MXAN_2022 (181 aa).

It belongs to the UPF0301 (AlgH) family.

The chain is UPF0301 protein MXAN_2022 from Myxococcus xanthus (strain DK1622).